The chain runs to 320 residues: ATP-dependent 6-phosphofructokinase (320 aa).

An ATP-binding site is contributed by G12. An ADP-binding site is contributed by R22–R26. Residues R73–F74 and G103–S106 each bind ATP. Position 104 (D104) interacts with Mg(2+). Residue T126 to D128 coordinates substrate. The active-site Proton acceptor is the D128. An ADP-binding site is contributed by R155. Residues R163 and M170–R172 each bind substrate. Residues G186–E188 and K214–H216 contribute to the ADP site. Substrate contacts are provided by residues E223, R244, and H250–R253.

It belongs to the phosphofructokinase type A (PFKA) family. ATP-dependent PFK group I subfamily. Prokaryotic clade 'B1' sub-subfamily. In terms of assembly, homotetramer. Requires Mg(2+) as cofactor.

It is found in the cytoplasm. The catalysed reaction is beta-D-fructose 6-phosphate + ATP = beta-D-fructose 1,6-bisphosphate + ADP + H(+). Its pathway is carbohydrate degradation; glycolysis; D-glyceraldehyde 3-phosphate and glycerone phosphate from D-glucose: step 3/4. With respect to regulation, allosterically activated by ADP and other diphosphonucleosides, and allosterically inhibited by phosphoenolpyruvate. In terms of biological role, catalyzes the phosphorylation of D-fructose 6-phosphate to fructose 1,6-bisphosphate by ATP, the first committing step of glycolysis. This Teredinibacter turnerae (strain ATCC 39867 / T7901) protein is ATP-dependent 6-phosphofructokinase.